Reading from the N-terminus, the 595-residue chain is MKQSHIRNFAIIAHIDHGKSTLADQIMSLTQTVSAREQHAQLLDDMTVEQAHGVTVKARTVRNYYQADDGQEYEYNLIDTPGHVDFNYEVAKSLAATEGAILLVDATQGVQAQTIANYRIAKQRQLTLIPVLNKVDLPSADIDAALAQLNDLDSAFTPEQVLQISAKTGQGVPAVLEAIKQRLPAPQGDLHQPLKALVFDSLYDPYQGVIAYVRLIDGQLKSQQALCLMQGQQDFNGKAIGVFAPQMHPQESLSAGDVGYVVTGIKDPRKVRVGDTLTSVATPTQRPLAGYQPAKSMVFAGLYPKNNDYPALKEAVQKLNLNDPSFTYVEERSEALGVGFRCGFLGTFHLQIIRERLHDEYGVDVLTTAPNVTYHVTLTNGQQVIVNNPVQFPAFSLIKEVTEPFMKAEITMPADNLNAVLKLAEQHKGTLIDLANSGDLIVASLKIPLSEIAYHFFSELKSVSHGFASLSTAFMANEVSDLVKVEVDINYAPVDALTFIVHREDAPNMTQQLVANLKTTVPRQLYPTPVQARVEGKVIARVDVPPLRKNAAVNGEQHSTSKKAALLRRQSANKRRASKNTIKLPQSVFNAILSL.

Positions 4 to 187 (SHIRNFAIIA…AIKQRLPAPQ (184 aa)) constitute a tr-type G domain. GTP contacts are provided by residues 16–21 (DHGKST) and 133–136 (NKVD).

It belongs to the TRAFAC class translation factor GTPase superfamily. Classic translation factor GTPase family. LepA subfamily.

It is found in the cell membrane. It carries out the reaction GTP + H2O = GDP + phosphate + H(+). In terms of biological role, required for accurate and efficient protein synthesis under certain stress conditions. May act as a fidelity factor of the translation reaction, by catalyzing a one-codon backward translocation of tRNAs on improperly translocated ribosomes. Back-translocation proceeds from a post-translocation (POST) complex to a pre-translocation (PRE) complex, thus giving elongation factor G a second chance to translocate the tRNAs correctly. Binds to ribosomes in a GTP-dependent manner. This chain is Elongation factor 4 2, found in Lactiplantibacillus plantarum (strain ATCC BAA-793 / NCIMB 8826 / WCFS1) (Lactobacillus plantarum).